Here is a 5538-residue protein sequence, read N- to C-terminus: Leashin (5538 aa).

The span at 1–10 (MFRALMGGGR) shows a compositional bias: gly residues. Disordered stretches follow at residues 1–270 (MFRA…SSMG), 286–315 (EVDP…TFGI), 331–365 (LPLP…PHTH), 510–555 (SRDA…KKSS), 596–712 (TESV…DISQ), 800–901 (AATS…FPTG), 913–944 (ALAS…PVPT), 1027–1145 (NRPH…KDSF), 1164–1297 (VLSG…GYRD), 1310–1398 (PTPP…RYVS), 1432–1993 (EDPT…TSVE), 2067–2146 (SELL…VNAF), 2165–2207 (NRLS…SPPA), 2233–3065 (PEAA…SQPI), 3077–3894 (MAEE…EIVS), 3910–4034 (EEKA…DTGL), 4072–4128 (KFKQ…EEPL), 4238–4421 (EAAL…SNQA), 4442–4463 (PRPL…DEND), 4509–4698 (LRRQ…TSNT), 4733–4850 (KTDG…VEQA), and 4910–5052 (ALTV…RHRR). A woronin bodies-binding region region spans residues 1–1100 (MFRALMGGGR…RASGVQLIDR (1100 aa)). The segment covering 14-23 (SRSTTSSSKS) has biased composition (low complexity). Basic and acidic residues-rich tracts occupy residues 42 to 51 (SRGDDRDRGL) and 89 to 167 (VEHD…ERSR). The segment covering 299–313 (AGTTSEPPKPSNTTF) has biased composition (polar residues). Residues 334 to 352 (PASPTSPPEPVPTTAPYAP) are compositionally biased toward pro residues. Positions 514–523 (PRKHHYRQRR) are enriched in basic residues. Residues 598-607 (SVSTARRSQT) show a composition bias toward polar residues. The span at 639-655 (HRSRSRSHSSSRNRRHS) shows a compositional bias: basic residues. Low complexity predominate over residues 660–674 (AAVGAAVGSGAIALA). Positions 682 to 698 (SRSRSRSRFPRKSKGRK) are enriched in basic residues. Basic and acidic residues predominate over residues 809–825 (RAGEILVAKETRSRHSD). 2 stretches are compositionally biased toward low complexity: residues 842–851 (GDQSSSSVSS) and 862–880 (GSDE…GWRW). Positions 881–891 (GSKKNKKKKRA) are enriched in basic residues. Composition is skewed to basic and acidic residues over residues 1068–1091 (LTKE…DAER), 1098–1145 (IDRD…KDSF), 1178–1198 (SQRR…RGSE), 1207–1226 (SKSE…RQPE), 1356–1365 (WGEHKTHEYE), 1375–1387 (SVDH…REQP), 1447–1462 (GRVE…ESKS), and 1478–1488 (EEKAPSSRVIE). Over residues 1506–1516 (QESSEPQTRTS) the composition is skewed to low complexity. Basic and acidic residues-rich tracts occupy residues 1521–1536 (VIDR…DGSR), 1549–1559 (GKERDESELRA), and 1572–1594 (EELR…DRRS). Positions 1639–1648 (KKKRRKRRSK) are enriched in basic residues. Composition is skewed to basic and acidic residues over residues 1672-1686 (EKLK…EKKA), 1700-1773 (EPVD…QRRE), and 1788-1800 (KSGE…KLSE). 2 stretches are compositionally biased toward low complexity: residues 1867–1876 (PAPRSRSRPA) and 1889–1898 (SQSSRRSSIL). The segment covering 1950-1975 (KNSREMRPLWLVERHGPGHGEHKLEE) has biased composition (basic and acidic residues). Polar residues-rich tracts occupy residues 1984–1993 (KTSSANTSVE) and 2121–2130 (TPQNNVTAAS). Basic and acidic residues-rich tracts occupy residues 2187–2196 (DADRTHKPIA), 2269–2279 (VPRDDKRRDSV), and 2307–2320 (GENK…KNEN). Polar residues predominate over residues 2321–2331 (ANDNSQAQTEQ). A compositionally biased stretch (basic residues) spans 2344–2355 (AKKKKKKNKKKR). Residues 2358-2370 (MDSNTQEPTTPVD) are compositionally biased toward polar residues. The segment covering 2427-2441 (DVEKAIEAPDVRKEL) has biased composition (basic and acidic residues). The segment covering 2449-2461 (APEDTPAEPTAET) has biased composition (low complexity). Residues 2473 to 2484 (KKSKKKKKKKNK) are compositionally biased toward basic residues. Polar residues predominate over residues 2494-2525 (DPASTETPEASAANSQVVAAEQVESTLETTQP). 3 stretches are compositionally biased toward basic and acidic residues: residues 2580–2590 (NQAKELPHPEE), 2647–2661 (PEDK…DLKS), and 2677–2691 (ALDK…RPAE). The span at 2719–2734 (EEPTPTAAELETPLSR) shows a compositional bias: low complexity. A compositionally biased stretch (basic residues) spans 2735–2747 (KNSKKNKKKNKRK). A compositionally biased stretch (basic and acidic residues) spans 2796–2812 (DENKGESRDVQAVKEET). Basic residues predominate over residues 2874 to 2884 (KKKAKKKKNRK). Polar residues predominate over residues 2885 to 2894 (TANVSESQPE). 2 stretches are compositionally biased toward basic residues: residues 3003-3013 (KKSKKNKKKKQ) and 3089-3100 (KKTKKEKKKKRQ). The segment covering 3145–3172 (AIEHAEAAAEHSQEQPNKDVTLHADHSP) has biased composition (basic and acidic residues). Low complexity predominate over residues 3248 to 3268 (PAMEGGAAAEELVAVEPDVLE). Positions 3293-3303 (ELVNAETTQKT) are enriched in polar residues. Basic residues predominate over residues 3329-3341 (SKKKDKKKKKKRQ). Residues 3347 to 3367 (DEQRSSTKEEPTAEFSSDHVP) are compositionally biased toward basic and acidic residues. Composition is skewed to low complexity over residues 3397 to 3409 (TQTA…SSAS) and 3422 to 3435 (ESTQ…AQTA). Over residues 3436 to 3450 (KSKKKAKKDKKKRKS) the composition is skewed to basic residues. Over residues 3480–3495 (EGPKPGDKPTSPKDSS) the composition is skewed to basic and acidic residues. The segment covering 3547–3564 (EEQAVVEETVAPPVVDEA) has biased composition (low complexity). Composition is skewed to polar residues over residues 3565-3580 (SQLQ…LWSE) and 3604-3613 (VSPSLENNEG). Composition is skewed to basic residues over residues 3642–3652 (KSKKNKKKKKR) and 3716–3730 (KAKK…KRQS). Polar residues predominate over residues 3768–3787 (TFSQETSETISTEAKSSEPS). Residues 3800–3819 (KENQSHDTEPHGGNDKDLTW) are compositionally biased toward basic and acidic residues. A compositionally biased stretch (polar residues) spans 3823–3837 (MVSSQVEQQQGTPSD). Basic and acidic residues predominate over residues 3876–3893 (DRLERSGEEGTRVKKEIV). Polar residues-rich tracts occupy residues 3915-3925 (ISSQGEDTIQV) and 3965-3980 (KDQF…SQSK). A compositionally biased stretch (acidic residues) spans 4010–4020 (TSQDDSVDAVQ). Over residues 4111–4123 (ESRENKFKEKQLA) the composition is skewed to basic and acidic residues. The span at 4244 to 4255 (KNSKKKSKKAKK) shows a compositional bias: basic residues. Residues 4328–4345 (LGQTPNMDNQTDDVQSTE) show a composition bias toward polar residues. Basic residues predominate over residues 4378 to 4391 (KLSKKDRRKAKKKS). Over residues 4392–4406 (AKDAIEPSDEPELRN) the composition is skewed to basic and acidic residues. The segment at 4495-5538 (AIAEFDETAI…SSTMDISNVI (1044 aa)) is septal pore-binding region. Positions 4554-4570 (TEQSAGLQAKSVSSQGA) are enriched in polar residues. 2 stretches are compositionally biased toward basic and acidic residues: residues 4574–4591 (IQDD…DQTK) and 4660–4673 (EESH…EKGP). The span at 4940–4954 (SSVSSVKSVQSTHSV) shows a compositional bias: low complexity. Over residues 4966–4988 (RNTSGDLRAASQAQESHGTQPHA) the composition is skewed to polar residues. Residues 4989-4998 (TPQPPQPPPS) show a composition bias toward pro residues. The stretch at 5050-5223 (HRRSMQHLQE…QQQIAASLHD (174 aa)) forms a coiled coil.

Binds directly or indirectly to the Woronin body major protein hexA.

The protein localises to the cell septum. Functionally, acts as the tether and is essential for anchoring of Woronin bodies at the septal pore. In damaged hyphae, Woronin bodies occlude septal pores in order to separate intact from damaged compartments. This is Leashin from Aspergillus fumigatus (strain ATCC MYA-4609 / CBS 101355 / FGSC A1100 / Af293) (Neosartorya fumigata).